The chain runs to 146 residues: Large ribosomal subunit protein uL13 (146 aa).

Positions Y125–G146 are disordered.

The protein belongs to the universal ribosomal protein uL13 family. In terms of assembly, part of the 50S ribosomal subunit.

In terms of biological role, this protein is one of the early assembly proteins of the 50S ribosomal subunit, although it is not seen to bind rRNA by itself. It is important during the early stages of 50S assembly. The sequence is that of Large ribosomal subunit protein uL13 from Roseiflexus sp. (strain RS-1).